Reading from the N-terminus, the 175-residue chain is UPF0398 protein SUB1405 (175 aa).

This sequence belongs to the UPF0398 family.

This chain is UPF0398 protein SUB1405, found in Streptococcus uberis (strain ATCC BAA-854 / 0140J).